The chain runs to 930 residues: Isoleucine--tRNA ligase (930 aa).

Residues 57-67 carry the 'HIGH' region motif; that stretch reads PYANGNIHVGH. E554 contributes to the L-isoleucyl-5'-AMP binding site. A 'KMSKS' region motif is present at residues 595–599; the sequence is KMSKS. K598 is an ATP binding site. Zn(2+)-binding residues include C888, C891, C908, and C911.

It belongs to the class-I aminoacyl-tRNA synthetase family. IleS type 1 subfamily. Monomer. The cofactor is Zn(2+).

It is found in the cytoplasm. It carries out the reaction tRNA(Ile) + L-isoleucine + ATP = L-isoleucyl-tRNA(Ile) + AMP + diphosphate. Catalyzes the attachment of isoleucine to tRNA(Ile). As IleRS can inadvertently accommodate and process structurally similar amino acids such as valine, to avoid such errors it has two additional distinct tRNA(Ile)-dependent editing activities. One activity is designated as 'pretransfer' editing and involves the hydrolysis of activated Val-AMP. The other activity is designated 'posttransfer' editing and involves deacylation of mischarged Val-tRNA(Ile). This chain is Isoleucine--tRNA ligase, found in Streptococcus pneumoniae (strain P1031).